Reading from the N-terminus, the 101-residue chain is DNA-directed RNA polymerase subunit omega (101 aa).

Over residues 1-13 (MSSTPAAASATPS) the composition is skewed to low complexity. Residues 1-22 (MSSTPAAASATPSHGALPAYDT) form a disordered region.

This sequence belongs to the RNA polymerase subunit omega family. In terms of assembly, the RNAP catalytic core consists of 2 alpha, 1 beta, 1 beta' and 1 omega subunit. When a sigma factor is associated with the core the holoenzyme is formed, which can initiate transcription.

It carries out the reaction RNA(n) + a ribonucleoside 5'-triphosphate = RNA(n+1) + diphosphate. Functionally, promotes RNA polymerase assembly. Latches the N- and C-terminal regions of the beta' subunit thereby facilitating its interaction with the beta and alpha subunits. The sequence is that of DNA-directed RNA polymerase subunit omega from Rhodococcus jostii (strain RHA1).